Here is a 541-residue protein sequence, read N- to C-terminus: Chaperonin GroEL 2 (541 aa).

ATP contacts are provided by residues 30-33, K51, 87-91, G415, and D496; these read TLGP and DGTTT.

It belongs to the chaperonin (HSP60) family. As to quaternary structure, forms a cylinder of 14 subunits composed of two heptameric rings stacked back-to-back. Interacts with the co-chaperonin GroES.

It is found in the cytoplasm. The catalysed reaction is ATP + H2O + a folded polypeptide = ADP + phosphate + an unfolded polypeptide.. Functionally, together with its co-chaperonin GroES, plays an essential role in assisting protein folding. The GroEL-GroES system forms a nano-cage that allows encapsulation of the non-native substrate proteins and provides a physical environment optimized to promote and accelerate protein folding. The chain is Chaperonin GroEL 2 from Bradyrhizobium sp. (strain BTAi1 / ATCC BAA-1182).